The following is a 468-amino-acid chain: Chromosomal replication initiator protein DnaA (468 aa).

The interval 1–84 is domain I, interacts with DnaA modulators; sequence MSSSLWLQCL…RFEVGSRPVS (84 aa). The interval 80–106 is disordered; that stretch reads SRPVSAPKPAPTRTPADVAAESSAPAQ. The domain II stretch occupies residues 84–131; the sequence is SAPKPAPTRTPADVAAESSAPAQLQARKPVHKTWDDDPQAIAAINHRS. Positions 132–348 are domain III, AAA+ region; sequence NMNPKHKFDN…GALNRVIANA (217 aa). ATP contacts are provided by Gly176, Gly178, Lys179, and Thr180. Residues 349–468 are domain IV, binds dsDNA; sequence NFTGRPITID…YSNLIRTLSS (120 aa).

It belongs to the DnaA family. In terms of assembly, oligomerizes as a right-handed, spiral filament on DNA at oriC.

The protein localises to the cytoplasm. Plays an essential role in the initiation and regulation of chromosomal replication. ATP-DnaA binds to the origin of replication (oriC) to initiate formation of the DNA replication initiation complex once per cell cycle. Binds the DnaA box (a 9 base pair repeat at the origin) and separates the double-stranded (ds)DNA. Forms a right-handed helical filament on oriC DNA; dsDNA binds to the exterior of the filament while single-stranded (ss)DNA is stabiized in the filament's interior. The ATP-DnaA-oriC complex binds and stabilizes one strand of the AT-rich DNA unwinding element (DUE), permitting loading of DNA polymerase. After initiation quickly degrades to an ADP-DnaA complex that is not apt for DNA replication. Binds acidic phospholipids. The polypeptide is Chromosomal replication initiator protein DnaA (Vibrio parahaemolyticus serotype O3:K6 (strain RIMD 2210633)).